Here is a 325-residue protein sequence, read N- to C-terminus: tRNA dimethylallyltransferase (325 aa).

An ATP-binding site is contributed by 16-23; the sequence is GPTASGKT. Position 18–23 (18–23) interacts with substrate; the sequence is TASGKT. Interaction with substrate tRNA regions lie at residues 41 to 44, 165 to 169, 253 to 258, and 286 to 293; these read DSAL, QRIQR, RCVGYR, and KRQITWLR.

This sequence belongs to the IPP transferase family. In terms of assembly, monomer. Mg(2+) serves as cofactor.

It catalyses the reaction adenosine(37) in tRNA + dimethylallyl diphosphate = N(6)-dimethylallyladenosine(37) in tRNA + diphosphate. In terms of biological role, catalyzes the transfer of a dimethylallyl group onto the adenine at position 37 in tRNAs that read codons beginning with uridine, leading to the formation of N6-(dimethylallyl)adenosine (i(6)A). This chain is tRNA dimethylallyltransferase, found in Ralstonia pickettii (strain 12J).